Consider the following 418-residue polypeptide: Secernin-3 (418 aa).

Residues 1–5 constitute a propeptide that is removed on maturation; that stretch reads MEPYS. Cys-6 is a catalytic residue. Position 6 is a glyoxylic acid (Cys); alternate (Cys-6). Position 6 is a pyruvic acid (Cys); alternate (Cys-6).

It belongs to the peptidase C69 family. Secernin subfamily.

Its function is as follows. Plays a role in thermal nociception. This Mus musculus (Mouse) protein is Secernin-3 (Scrn3).